The sequence spans 497 residues: UDP-N-acetylmuramoyl-L-alanyl-D-glutamate--2,6-diaminopimelate ligase (497 aa).

S33 contributes to the UDP-N-acetyl-alpha-D-muramoyl-L-alanyl-D-glutamate binding site. 119 to 125 (GTNGKTT) provides a ligand contact to ATP. UDP-N-acetyl-alpha-D-muramoyl-L-alanyl-D-glutamate-binding positions include 161-162 (TT), S188, Q194, and R196. K228 bears the N6-carboxylysine mark. Residues R390, 414-417 (DNPR), G465, and E469 contribute to the meso-2,6-diaminopimelate site. The Meso-diaminopimelate recognition motif motif lies at 414 to 417 (DNPR).

This sequence belongs to the MurCDEF family. MurE subfamily. The cofactor is Mg(2+). Carboxylation is probably crucial for Mg(2+) binding and, consequently, for the gamma-phosphate positioning of ATP.

The protein localises to the cytoplasm. It catalyses the reaction UDP-N-acetyl-alpha-D-muramoyl-L-alanyl-D-glutamate + meso-2,6-diaminopimelate + ATP = UDP-N-acetyl-alpha-D-muramoyl-L-alanyl-gamma-D-glutamyl-meso-2,6-diaminopimelate + ADP + phosphate + H(+). The protein operates within cell wall biogenesis; peptidoglycan biosynthesis. Catalyzes the addition of meso-diaminopimelic acid to the nucleotide precursor UDP-N-acetylmuramoyl-L-alanyl-D-glutamate (UMAG) in the biosynthesis of bacterial cell-wall peptidoglycan. The polypeptide is UDP-N-acetylmuramoyl-L-alanyl-D-glutamate--2,6-diaminopimelate ligase (Synechococcus elongatus (strain ATCC 33912 / PCC 7942 / FACHB-805) (Anacystis nidulans R2)).